We begin with the raw amino-acid sequence, 384 residues long: Eukaryotic translation initiation factor 3 subunit M (384 aa).

The PCI domain maps to 184-346 (ENRKAIEAMI…KKILITGAFP (163 aa)).

This sequence belongs to the eIF-3 subunit M family. Component of the eukaryotic translation initiation factor 3 (eIF-3) complex.

It is found in the cytoplasm. In terms of biological role, component of the eukaryotic translation initiation factor 3 (eIF-3) complex, which is involved in protein synthesis of a specialized repertoire of mRNAs and, together with other initiation factors, stimulates binding of mRNA and methionyl-tRNAi to the 40S ribosome. The eIF-3 complex specifically targets and initiates translation of a subset of mRNAs involved in cell proliferation. In Schistosoma japonicum (Blood fluke), this protein is Eukaryotic translation initiation factor 3 subunit M.